The following is a 232-amino-acid chain: Small ribosomal subunit protein uS2 (232 aa).

Belongs to the universal ribosomal protein uS2 family.

The protein is Small ribosomal subunit protein uS2 of Desulforamulus reducens (strain ATCC BAA-1160 / DSM 100696 / MI-1) (Desulfotomaculum reducens).